A 179-amino-acid chain; its full sequence is Stress response regulator gls24 homolog (179 aa).

The interval 147 to 179 is disordered; that stretch reads TSEFTSHQVENVKASVDNGVEKLQDQKAEPRVK. The span at 165–179 shows a compositional bias: basic and acidic residues; that stretch reads GVEKLQDQKAEPRVK.

This sequence belongs to the asp23 family.

This is Stress response regulator gls24 homolog from Streptococcus pyogenes serotype M28 (strain MGAS6180).